The following is a 229-amino-acid chain: Uridylate cyclase (229 aa).

One can recognise a Guanylate cyclase domain in the interval 47–178 (TVLYADLDGS…RAANYAAKLT (132 aa)). Y50 contributes to the a ribonucleoside 5'-triphosphate binding site. Mn(2+) is bound by residues D52 and D96. A ribonucleoside 5'-triphosphate is bound at residue R97.

It belongs to the adenylyl cyclase class-4/guanylyl cyclase family. Pyrimidine cyclase subfamily. In terms of assembly, homodimer. It depends on Mn(2+) as a cofactor.

It localises to the cytoplasm. The catalysed reaction is UTP = 3',5'-cyclic UMP + diphosphate. Functionally, pycsar (pyrimidine cyclase system for antiphage resistance) provides immunity against bacteriophage. The pyrimidine cyclase (PycC) synthesizes cyclic nucleotides in response to infection; these serve as specific second messenger signals. The signals activate the adjacent effector, leading to bacterial cell death and abortive phage infection. A clade B Pycsar system. In terms of biological role, the pyrimidine cyclase gene of a two-gene Pycsar system, generates cyclic UMP (cUMP) from UTP, has little to no activity on ATP, CTP or GTP. Expression of this and adjacent effector BcPycTIR (AC A0A0J5WTU0) probably confers resistance to bacteriophage. The genes are probably only expressed in response to bacteriophage infection. This chain is Uridylate cyclase, found in Burkholderia cepacia (Pseudomonas cepacia).